The sequence spans 353 residues: MLIFPLLNDLSRKIIHIDMDAFFAAVEIRDNPKLRGKPVIIGSDPRQTGGRGVVSTCSYEARAFGVHSAMSSKEAYERCPQAVFISGNYEKYKSVGLQIRAIFKRYTDLIEPMSIDEAYLDVTENKLGIKSAVKIARLIQKDIWQELHLTASAGVSYNKFLAKMASDYQKPHGLTVILPEQAEDFLKQMDISKFHGVGKKTVERLHQMGVFTGADLLEVPEVTLIDRFGRLGYDLYRKARGIHNSPVKSNRIRKSIGKEKTYGKILLAEEDIKKELTLLSEKVALNLHQQEKAGKIVILKIRYEDFSTLTKRKSLAQKTQDASQISQIALQLYEELSKKERGVRLLGITMTGF.

Residues 14-198 (IIHIDMDAFF…MDISKFHGVG (185 aa)) enclose the UmuC domain. Residues aspartate 18 and aspartate 116 each contribute to the Mg(2+) site. The active site involves glutamate 117.

It belongs to the DNA polymerase type-Y family. In terms of assembly, monomer. Mg(2+) is required as a cofactor.

The protein localises to the cytoplasm. The enzyme catalyses DNA(n) + a 2'-deoxyribonucleoside 5'-triphosphate = DNA(n+1) + diphosphate. Functionally, poorly processive, error-prone DNA polymerase involved in untargeted mutagenesis. Copies undamaged DNA at stalled replication forks, which arise in vivo from mismatched or misaligned primer ends. These misaligned primers can be extended by PolIV. Exhibits no 3'-5' exonuclease (proofreading) activity. May be involved in translesional synthesis, in conjunction with the beta clamp from PolIII. The chain is DNA polymerase IV from Streptococcus pneumoniae serotype 4 (strain ATCC BAA-334 / TIGR4).